Consider the following 256-residue polypeptide: Probable enoyl-CoA hydratase echA14 (256 aa).

The segment at 235-256 (GPQAKSVQSPEFAARLAAAQHR) is disordered.

Belongs to the enoyl-CoA hydratase/isomerase family.

It carries out the reaction a (3S)-3-hydroxyacyl-CoA = a (2E)-enoyl-CoA + H2O. The catalysed reaction is a 4-saturated-(3S)-3-hydroxyacyl-CoA = a (3E)-enoyl-CoA + H2O. Functionally, could possibly oxidize fatty acids using specific components. The polypeptide is Probable enoyl-CoA hydratase echA14 (echA14) (Mycobacterium tuberculosis (strain CDC 1551 / Oshkosh)).